A 32-amino-acid polypeptide reads, in one-letter code: Kappa-theraphotoxin-Gr2b (32 aa).

3 disulfides stabilise this stretch: Cys-2-Cys-16, Cys-9-Cys-21, and Cys-15-Cys-25.

It belongs to the neurotoxin 30 (phrixotoxin) family. As to expression, expressed by the venom gland.

The protein resides in the secreted. Its function is as follows. Binds the voltage-sensor domain of the potassium channel KvAP (from the archaeon Aeropyrum pernix) and affects channel gating. In Grammostola rosea (Chilean rose tarantula), this protein is Kappa-theraphotoxin-Gr2b.